Reading from the N-terminus, the 126-residue chain is SNRPMPLNRWQFKNMISCTVPSRSWWDFADYGCYCGRGGSGTPVDDLDRCCQVHDNCYNEAEKISGCNPRFRTYSYECTAGTLTCTGRNNACAASVCDCDRLAAICFAGAPYNDNNYNIDLQARCN.

Residues 1-7 (SNRPMPL) constitute a propeptide that is removed on maturation. Intrachain disulfides connect C18–C78, C33–C125, C35–C51, C50–C106, C57–C99, C67–C92, and C85–C97. Ca(2+) is bound by residues Y34, G36, and G38. H54 is an active-site residue. D55 is a binding site for Ca(2+). D100 is an active-site residue.

Belongs to the phospholipase A2 family. Group I subfamily. D49 sub-subfamily. As to quaternary structure, heterodimer formed between two homologous isoforms: isoform 1 and isoform 2. It depends on Ca(2+) as a cofactor. As to expression, expressed by the venom gland.

The protein resides in the secreted. The catalysed reaction is a 1,2-diacyl-sn-glycero-3-phosphocholine + H2O = a 1-acyl-sn-glycero-3-phosphocholine + a fatty acid + H(+). Functionally, PLA2 catalyzes the calcium-dependent hydrolysis of the 2-acyl groups in 3-sn-phosphoglycerides. The polypeptide is Acidic phospholipase A2 2 (Naja sagittifera (Andaman cobra)).